We begin with the raw amino-acid sequence, 742 residues long: Cullin-2 (742 aa).

The 63-residue stretch at Asp672–Asn734 folds into the Cullin neddylation domain. A Glycyl lysine isopeptide (Lys-Gly) (interchain with G-Cter in NEDD8) cross-link involves residue Lys686.

The protein belongs to the cullin family. As to quaternary structure, interacts with SKIP17 and FBW2/SKIP18. In terms of processing, neddylated; which enhances the ubiquitination activity of E3 ubiquitin-protein ligase complexes.

Functionally, core component of multiple SCF (SKP1-CUL1-F-box protein) E3 ubiquitin-protein ligase complexes. Involved in ubiquitination and subsequent proteasomal degradation of target proteins. In Arabidopsis thaliana (Mouse-ear cress), this protein is Cullin-2 (CUL2).